Reading from the N-terminus, the 711-residue chain is Hydroperoxide isomerase ALOXE3 (711 aa).

One can recognise a PLAT domain in the interval 2–119; sequence AVYRLCVTTG…TVELRPGTAR (118 aa). Positions 120 to 711 constitute a Lipoxygenase domain; it reads TICQDSLPLL…PPLIENSVSI (592 aa). Residues His408, His413, His588, Asn592, and Ile711 each contribute to the Fe cation site.

It belongs to the lipoxygenase family. Requires Fe cation as cofactor. In terms of tissue distribution, predominantly expressed in skin.

It is found in the cytoplasm. It catalyses the reaction a hydroperoxyeicosatetraenoate = a hydroxy-epoxy-eicosatetraenoate. It carries out the reaction (12R)-hydroperoxy-(5Z,8Z,10E,14Z)-eicosatetraenoate = (8R)-hydroxy-(11R,12R)-epoxy-(5Z,9E,14Z)-eicosatrienoate. The enzyme catalyses (12S)-hydroperoxy-(5Z,8Z,10E,14Z)-eicosatetraenoate = (8R)-hydroxy-(11S,12S)-epoxy-(5Z,9E,14Z)-eicosatrienoate. The catalysed reaction is (12S)-hydroperoxy-(5Z,8Z,10E,14Z)-eicosatetraenoate = (10R)-hydroxy-(11S,12S)-epoxy-(5Z,8Z,14Z)-eicosatrienoate. It catalyses the reaction (15S)-hydroperoxy-(5Z,8Z,11Z,13E)-eicosatetraenoate = (13R)-hydroxy-(14S,15S)-epoxy-(5Z,8Z,11Z)-eicosatrienoate. It carries out the reaction (5S)-hydroperoxy-(6E,8Z,11Z,14Z)-eicosatetraenoate = 7R-hydroxy-5S,6S-epoxy-(8Z,11Z,14Z)-eicosatrienoate. The enzyme catalyses (13S)-hydroperoxy-(9Z,11E)-octadecadienoate = 11-hydroxy-(12S,13S)-epoxy-(9Z)-octadecenoate. The catalysed reaction is N-[omega-(9R)-hydroperoxy-(10E,12Z)-octadecadienoyloxy]acyl-beta-D-glucosyl-(1&lt;-&gt;1)-octadecasphing-4E-enine = a N-[omega-(9R,10R)-epoxy-(13R)-hydroxy-(11E)-octadecenoyloxy]acyl-beta-D-glucosyl-(1&lt;-&gt;1)-sphing-4E-enine. It catalyses the reaction a N-[omega-(9R)-hydroperoxy-(10E,12Z)-octadecadienoyloxy]-acylsphin-4E-enine = a N-[omega-(9R,10R)-epoxy-(13R)-hydroxy-(11E)-octadecenoyloxy]-acylsphing-4E-enine. It carries out the reaction a hydroperoxyeicosatetraenoate = an oxoeicosatetraenoate + H2O. The enzyme catalyses (12R)-hydroperoxy-(5Z,8Z,10E,14Z)-eicosatetraenoate = 12-oxo-(5Z,8Z,10E,14Z)-eicosatetraenoate + H2O. The catalysed reaction is (12S)-hydroperoxy-(5Z,8Z,10E,14Z)-eicosatetraenoate = 12-oxo-(5Z,8Z,10E,14Z)-eicosatetraenoate + H2O. It catalyses the reaction (15S)-hydroperoxy-(5Z,8Z,11Z,13E)-eicosatetraenoate = 15-oxo-(5Z,8Z,11Z,13E)-eicosatetraenoate + H2O. It carries out the reaction (13S)-hydroperoxy-(9Z,11E)-octadecadienoate = 13-oxo-(9Z,11E)-octadecadienoate + H2O. The enzyme catalyses (8S)-hydroperoxy-(5Z,9E,11Z,14Z)-eicosatetraenoate = (10R)-hydroxy-(8S,9S)-epoxy-(5Z,11Z,14Z)-eicosatrienoate. The catalysed reaction is (8R)-hydroperoxy-(5Z,9E,11Z,14Z)-eicosatetraenoate = 8-oxo-(5Z,9E,11Z,14Z)-eicosatetraenoate + H2O. It catalyses the reaction (8S)-hydroperoxy-(5Z,9E,11Z,14Z)-eicosatetraenoate = 8-oxo-(5Z,9E,11Z,14Z)-eicosatetraenoate + H2O. It participates in lipid metabolism; hydroperoxy eicosatetraenoic acid biosynthesis. The protein operates within lipid metabolism; sphingolipid metabolism. Its activity is regulated as follows. Lipoxygenase activity is activated by 13(S)-HPODE leading to an active free ferric enzyme. The lipoxygenase and hydroperoxide isomerase activities are in competition and are reciprocally regulated by oxygen. The oxygen reacts with an epoxyallylic radical intermediate leading to an epoxyallylic peroxyl radical, which, due to its limited reactivity within the enzyme active site, it dissociates and leaves the enzyme in the activated free ferric state. Functionally, non-heme iron-containing lipoxygenase which is atypical in that it displays a prominent hydroperoxide isomerase activity and a reduced lipoxygenases activity. The hydroperoxide isomerase activity catalyzes the isomerization of hydroperoxides, derived from arachidonic and linoleic acid by ALOX12B, into hepoxilin-type epoxyalcohols and ketones. In presence of oxygen, oxygenates polyunsaturated fatty acids, including arachidonic acid, to produce fatty acid hydroperoxides. In the skin, acts downstream of ALOX12B on the linoleate moiety of esterified omega-hydroxyacyl-sphingosine (EOS) ceramides to produce an epoxy-ketone derivative, a crucial step in the conjugation of omega-hydroxyceramide to membrane proteins. Therefore plays a crucial role in the synthesis of corneocytes lipid envelope and the establishment of the skin barrier to water loss. In parallel, it may have a signaling function in barrier formation through the production of hepoxilins metabolites. Also plays a role in adipocyte differentiation through hepoxilin A3 and hepoxilin B3 production which in turn activate PPARG. Through the production of hepoxilins in the spinal cord, it may regulate inflammatory tactile allodynia. The chain is Hydroperoxide isomerase ALOXE3 from Homo sapiens (Human).